A 21-amino-acid polypeptide reads, in one-letter code: Venom peptide Tv1 (21 aa).

Disulfide bonds link Cys4/Cys20, Cys5/Cys21, and Cys7/Cys16.

Expressed by the salivary gland. This peptide is considered as a venom peptide.

It is found in the secreted. Its function is as follows. Injections of 20 uM of this synthetic peptide (Ile) causes partial paralysis to polychaete worms (Nereis virens), the natural prey of terebrid snails. This paralysis may be due to an inhibition of nicotinic receptors at the neuromuscular junction. The chain is Venom peptide Tv1 from Terebra variegata (Variegate auger snail).